Consider the following 346-residue polypeptide: NADH-quinone oxidoreductase subunit H (346 aa).

Transmembrane regions (helical) follow at residues 6–26 (ILFWLLKSGLFFFILITACAY), 76–96 (VMYLIAPAISMTCAIMAWSVV), 128–148 (ILFLFAISSLAVYGIIIAGWA), 166–186 (ISYELPLGMSVVSIVILSGSL), 198–218 (LWNIFKLPGFIAFCLFVVAMF), 260–280 (ITMSCVVTLLFFGGYQVPFGI), 289–309 (LFGLVFFLGKVLFFTFLFLWV), and 324–344 (LGWKKLIPWAILNILIASIYI).

It belongs to the complex I subunit 1 family. NDH-1 is composed of 14 different subunits. Subunits NuoA, H, J, K, L, M, N constitute the membrane sector of the complex.

The protein localises to the cell inner membrane. It catalyses the reaction a quinone + NADH + 5 H(+)(in) = a quinol + NAD(+) + 4 H(+)(out). NDH-1 shuttles electrons from NADH, via FMN and iron-sulfur (Fe-S) centers, to quinones in the respiratory chain. The immediate electron acceptor for the enzyme in this species is believed to be ubiquinone. Couples the redox reaction to proton translocation (for every two electrons transferred, four hydrogen ions are translocated across the cytoplasmic membrane), and thus conserves the redox energy in a proton gradient. This subunit may bind ubiquinone. The chain is NADH-quinone oxidoreductase subunit H from Leptospira interrogans serogroup Icterohaemorrhagiae serovar copenhageni (strain Fiocruz L1-130).